We begin with the raw amino-acid sequence, 59 residues long: Potassium channel toxin alpha-KTx 1.1 (59 aa).

The signal sequence occupies residues 1 to 22 (MKILSVLLLALIICSIVGWSEA). Pyrrolidone carboxylic acid is present on Q23. Cystine bridges form between C29-C50, C35-C55, and C39-C57. Positions 48-55 (GKCMNKKC) are interaction with Ca(2+)-activated K(+) channels.

Belongs to the short scorpion toxin superfamily. Potassium channel inhibitor family. Alpha-KTx 01 subfamily. In terms of tissue distribution, expressed by the venom gland.

It localises to the secreted. Functionally, this toxin inhibits numerous potassium channels: shaker (Ki=227 nM), Kv1.2/KCNA2 (nanomolar range), Kv1.3/KCNA3 (nanomolar range), Kv1.5/KCNA5 (Kd&gt;100 nM), Kv1.6/KCNA6 (Ki=22 nM), KCa1.1/KCNMA1 (IC(50)=5.9 nM). It blocks channel activity by a simple bimolecular inhibition process. It also shows a weak interaction with nicotinic acetylcholine receptors (nAChR), suggesting it may weakly inhibit it. It also exhibits pH-specific antimicrobial activities against bacteria (B.subtilis, E.coli and S.aureus) and the fungus C.albicans. This chain is Potassium channel toxin alpha-KTx 1.1, found in Leiurus hebraeus (Hebrew deathstalker scorpion).